The following is a 109-amino-acid chain: MAATALAARTRQAVWSVWAMQGRGFGSESGDNVRSSAGAVRDAGGAFGKREQAEEERYFRARAKEQLAALKKHHENEISHHAKEIERLQKEIERHKQSIKKLKQSEDDD.

The N-terminal 25 residues, 1-25, are a transit peptide targeting the mitochondrion; it reads MAATALAARTRQAVWSVWAMQGRGF. The interval 26-52 is disordered; it reads GSESGDNVRSSAGAVRDAGGAFGKREQ. The tract at residues 26–52 is N-terminal inhibitory region; the sequence is GSESGDNVRSSAGAVRDAGGAFGKREQ. A coiled-coil region spans residues 69–109; the sequence is ALKKHHENEISHHAKEIERLQKEIERHKQSIKKLKQSEDDD. The interval 74–106 is antiparallel alpha-helical coiled coil region; the sequence is HENEISHHAKEIERLQKEIERHKQSIKKLKQSE. K103 carries the N6-succinyllysine modification.

Belongs to the ATPase inhibitor family. In terms of assembly, homodimer; represents the active form and is present at a pH value below 6.5. Homotetramer; represents the inactive form and is present at a pH value above 7.0.

The protein resides in the mitochondrion. In terms of biological role, endogenous F(1)F(o)-ATPase inhibitor limiting ATP depletion when the mitochondrial membrane potential falls below a threshold and the F(1)F(o)-ATP synthase starts hydrolyzing ATP to pump protons out of the mitochondrial matrix. Required to avoid the consumption of cellular ATP when the F(1)F(o)-ATP synthase enzyme acts as an ATP hydrolase. Indirectly acts as a regulator of heme synthesis in erythroid tissues: regulates heme synthesis by modulating the mitochondrial pH and redox potential, allowing FECH to efficiently catalyze the incorporation of iron into protoporphyrin IX to produce heme. The polypeptide is ATPase inhibitor, mitochondrial (Bos taurus (Bovine)).